Consider the following 740-residue polypeptide: Ribosomal protein S6 kinase alpha-3 (740 aa).

The segment at 1–26 (MPLAQLADPWQKMAVESPSDSAENGQ) is disordered. The Protein kinase 1 domain occupies 68–327 (FELLKVLGQG…VEEIKRHSFF (260 aa)). Residues 74 to 82 (LGQGSFGKV) and K100 contribute to the ATP site. The active-site Proton acceptor is the D193. S227 is subject to Phosphoserine; by PDPK1. Residues 328 to 397 (STIDWNKLYR…VAITSDDESQ (70 aa)) enclose the AGC-kinase C-terminal domain. Phosphothreonine is present on T365. Phosphoserine occurs at positions 369 and 375. Residue S386 is modified to Phosphoserine; by autocatalysis and MAPKAPK2. A Phosphoserine modification is found at S415. Residues 422–679 (YEVKEDIGVG…AALVLRHPWI (258 aa)) form the Protein kinase 2 domain. ATP contacts are provided by residues 428–436 (IGVGSYSVC) and K451. Y529 carries the post-translational modification Phosphotyrosine; by FGFR3. Catalysis depends on D539, which acts as the Proton acceptor. 2 positions are modified to phosphoserine: S556 and S715.

The protein belongs to the protein kinase superfamily. AGC Ser/Thr protein kinase family. S6 kinase subfamily. Forms a complex with either MAPK1/ERK2 or MAPK3/ERK1 in quiescent cells. Transiently dissociates following mitogenic stimulation. Interacts with NFATC4, ETV1/ER81 and FGFR1. It depends on Mg(2+) as a cofactor. Post-translationally, activated by phosphorylation at Ser-227 by PDPK1. Autophosphorylated on Ser-386, as part of the activation process. May be phosphorylated at Thr-365 and Ser-369 by MAPK1/ERK2 and MAPK3/ERK1. Can also be activated via phosphorylation at Ser-386 by MAPKAPK2. In terms of processing, N-terminal myristoylation results in an activated kinase in the absence of added growth factors. In terms of tissue distribution, intestine, thymus, lung, heart and brain.

The protein resides in the nucleus. It is found in the cytoplasm. It catalyses the reaction L-seryl-[protein] + ATP = O-phospho-L-seryl-[protein] + ADP + H(+). It carries out the reaction L-threonyl-[protein] + ATP = O-phospho-L-threonyl-[protein] + ADP + H(+). Its activity is regulated as follows. Upon extracellular signal or mitogen stimulation, phosphorylated at Thr-577 in the C-terminal kinase domain (CTKD) by MAPK1/ERK2 and MAPK3/ERK1. The activated CTKD then autophosphorylates Ser-386, allowing binding of PDPK1, which in turn phosphorylates Ser-227 in the N-terminal kinase domain (NTDK) leading to the full activation of the protein and subsequent phosphorylation of the substrates by the NTKD. In terms of biological role, serine/threonine-protein kinase that acts downstream of ERK (MAPK1/ERK2 and MAPK3/ERK1) signaling and mediates mitogenic and stress-induced activation of the transcription factors CREB1, ETV1/ER81 and NR4A1/NUR77, regulates translation through RPS6 and EIF4B phosphorylation, and mediates cellular proliferation, survival, and differentiation by modulating mTOR signaling and repressing pro-apoptotic function of BAD and DAPK1. In fibroblast, is required for EGF-stimulated phosphorylation of CREB1 and histone H3 at 'Ser-10', which results in the subsequent transcriptional activation of several immediate-early genes. In response to mitogenic stimulation (EGF and PMA), phosphorylates and activates NR4A1/NUR77 and ETV1/ER81 transcription factors and the cofactor CREBBP. Upon insulin-derived signal, acts indirectly on the transcription regulation of several genes by phosphorylating GSK3B at 'Ser-9' and inhibiting its activity. Phosphorylates RPS6 in response to serum or EGF via an mTOR-independent mechanism and promotes translation initiation by facilitating assembly of the preinitiation complex. In response to insulin, phosphorylates EIF4B, enhancing EIF4B affinity for the EIF3 complex and stimulating cap-dependent translation. Is involved in the mTOR nutrient-sensing pathway by directly phosphorylating TSC2 at 'Ser-1798', which potently inhibits TSC2 ability to suppress mTOR signaling, and mediates phosphorylation of RPTOR, which regulates mTORC1 activity and may promote rapamycin-sensitive signaling independently of the PI3K/AKT pathway. Mediates cell survival by phosphorylating the pro-apoptotic proteins BAD and DAPK1 and suppressing their pro-apoptotic function. Promotes the survival of hepatic stellate cells by phosphorylating CEBPB in response to the hepatotoxin carbon tetrachloride (CCl4). Is involved in cell cycle regulation by phosphorylating the CDK inhibitor CDKN1B, which promotes CDKN1B association with 14-3-3 proteins and prevents its translocation to the nucleus and inhibition of G1 progression. In LPS-stimulated dendritic cells, is involved in TLR4-induced macropinocytosis, and in myeloma cells, acts as effector of FGFR3-mediated transformation signaling, after direct phosphorylation at Tyr-529 by FGFR3. Negatively regulates EGF-induced MAPK1/3 phosphorylation via phosphorylation of SOS1. Phosphorylates SOS1 at 'Ser-1134' and 'Ser-1161' that create YWHAB and YWHAE binding sites and which contribute to the negative regulation of MAPK1/3 phosphorylation. Phosphorylates EPHA2 at 'Ser-897', the RPS6KA-EPHA2 signaling pathway controls cell migration. Acts as a regulator of osteoblast differentiation by mediating phosphorylation of ATF4, thereby promoting ATF4 transactivation activity. This is Ribosomal protein S6 kinase alpha-3 (Rps6ka3) from Mus musculus (Mouse).